We begin with the raw amino-acid sequence, 113 residues long: Fruiting body-specific class I hydrophobin fbh1 (113 aa).

The signal sequence occupies residues 1–20; the sequence is MFSIRIATVVLAASALLAAA. 4 disulfide bridges follow: cysteine 33–cysteine 92, cysteine 40–cysteine 86, cysteine 41–cysteine 73, and cysteine 93–cysteine 106.

The protein belongs to the fungal hydrophobin family. As to quaternary structure, self-assembles to form functional amyloid fibrils called rodlets. Self-assembly into fibrillar rodlets occurs spontaneously at hydrophobic:hydrophilic interfaces and the rodlets further associate laterally to form amphipathic monolayers.

The protein resides in the secreted. The protein localises to the cell wall. Its function is as follows. Aerial growth, conidiation, and dispersal of filamentous fungi in the environment rely upon a capability of their secreting small amphipathic proteins called hydrophobins (HPBs) with low sequence identity. Class I can self-assemble into an outermost layer of rodlet bundles on aerial cell surfaces, conferring cellular hydrophobicity that supports fungal growth, development and dispersal; whereas Class II form highly ordered films at water-air interfaces through intermolecular interactions but contribute nothing to the rodlet structure. Fbh1 is a fruiting body-specific class I hydrophobin that is involved in the growth rate and primordia formation. In Pleurotus ostreatus (strain PC15) (Oyster mushroom), this protein is Fruiting body-specific class I hydrophobin fbh1.